The chain runs to 75 residues: Small ribosomal subunit protein bS18 (75 aa).

Belongs to the bacterial ribosomal protein bS18 family. As to quaternary structure, part of the 30S ribosomal subunit. Forms a tight heterodimer with protein bS6.

In terms of biological role, binds as a heterodimer with protein bS6 to the central domain of the 16S rRNA, where it helps stabilize the platform of the 30S subunit. The polypeptide is Small ribosomal subunit protein bS18 (Yersinia enterocolitica serotype O:8 / biotype 1B (strain NCTC 13174 / 8081)).